Consider the following 389-residue polypeptide: Formate-dependent phosphoribosylglycinamide formyltransferase (389 aa).

N(1)-(5-phospho-beta-D-ribosyl)glycinamide-binding positions include 21-22 (EL) and E81. ATP-binding positions include R113, K154, 159-164 (SSGKGQ), 194-197 (EEFI), and E202. Residues 118-307 (RLAAEKLGLK…EFEIHVRAIL (190 aa)) form the ATP-grasp domain. Positions 266 and 278 each coordinate Mg(2+). Residues D285, K353, and 360–361 (RR) contribute to the N(1)-(5-phospho-beta-D-ribosyl)glycinamide site.

It belongs to the PurK/PurT family. As to quaternary structure, homodimer.

It carries out the reaction N(1)-(5-phospho-beta-D-ribosyl)glycinamide + formate + ATP = N(2)-formyl-N(1)-(5-phospho-beta-D-ribosyl)glycinamide + ADP + phosphate + H(+). The protein operates within purine metabolism; IMP biosynthesis via de novo pathway; N(2)-formyl-N(1)-(5-phospho-D-ribosyl)glycinamide from N(1)-(5-phospho-D-ribosyl)glycinamide (formate route): step 1/1. Involved in the de novo purine biosynthesis. Catalyzes the transfer of formate to 5-phospho-ribosyl-glycinamide (GAR), producing 5-phospho-ribosyl-N-formylglycinamide (FGAR). Formate is provided by PurU via hydrolysis of 10-formyl-tetrahydrofolate. This Methanocaldococcus jannaschii (strain ATCC 43067 / DSM 2661 / JAL-1 / JCM 10045 / NBRC 100440) (Methanococcus jannaschii) protein is Formate-dependent phosphoribosylglycinamide formyltransferase.